Reading from the N-terminus, the 526-residue chain is Bifunctional purine biosynthesis protein PurH (526 aa).

The region spanning 1 to 147 (MSVIKRALIS…KNWKHVAIVT (147 aa)) is the MGS-like domain.

This sequence belongs to the PurH family.

The catalysed reaction is (6R)-10-formyltetrahydrofolate + 5-amino-1-(5-phospho-beta-D-ribosyl)imidazole-4-carboxamide = 5-formamido-1-(5-phospho-D-ribosyl)imidazole-4-carboxamide + (6S)-5,6,7,8-tetrahydrofolate. The enzyme catalyses IMP + H2O = 5-formamido-1-(5-phospho-D-ribosyl)imidazole-4-carboxamide. The protein operates within purine metabolism; IMP biosynthesis via de novo pathway; 5-formamido-1-(5-phospho-D-ribosyl)imidazole-4-carboxamide from 5-amino-1-(5-phospho-D-ribosyl)imidazole-4-carboxamide (10-formyl THF route): step 1/1. Its pathway is purine metabolism; IMP biosynthesis via de novo pathway; IMP from 5-formamido-1-(5-phospho-D-ribosyl)imidazole-4-carboxamide: step 1/1. The polypeptide is Bifunctional purine biosynthesis protein PurH (Neisseria gonorrhoeae (strain ATCC 700825 / FA 1090)).